Consider the following 467-residue polypeptide: Fumarate hydratase class II (467 aa).

Residues Ser98–Thr100, Arg126, His129–Asp132, Ser139–Asn141, and Thr187 each bind substrate. The active-site Proton donor/acceptor is His188. The active site involves Ser318. Substrate is bound by residues Ser319 and Lys324–Asn326.

The protein belongs to the class-II fumarase/aspartase family. Fumarase subfamily. As to quaternary structure, homotetramer.

Its subcellular location is the cytoplasm. The catalysed reaction is (S)-malate = fumarate + H2O. Its pathway is carbohydrate metabolism; tricarboxylic acid cycle; (S)-malate from fumarate: step 1/1. Involved in the TCA cycle. Catalyzes the stereospecific interconversion of fumarate to L-malate. In Salmonella typhi, this protein is Fumarate hydratase class II.